A 368-amino-acid polypeptide reads, in one-letter code: Ribosomal RNA large subunit methyltransferase M (368 aa).

S-adenosyl-L-methionine-binding positions include Ser-189, 222-225 (CPGG), Asp-241, Asp-261, and Asp-278. Lys-307 functions as the Proton acceptor in the catalytic mechanism.

The protein belongs to the class I-like SAM-binding methyltransferase superfamily. RNA methyltransferase RlmE family. RlmM subfamily. As to quaternary structure, monomer.

The protein localises to the cytoplasm. The enzyme catalyses cytidine(2498) in 23S rRNA + S-adenosyl-L-methionine = 2'-O-methylcytidine(2498) in 23S rRNA + S-adenosyl-L-homocysteine + H(+). In terms of biological role, catalyzes the 2'-O-methylation at nucleotide C2498 in 23S rRNA. In Yersinia pestis bv. Antiqua (strain Angola), this protein is Ribosomal RNA large subunit methyltransferase M.